We begin with the raw amino-acid sequence, 260 residues long: tRNA pseudouridine synthase A (260 aa).

Residue Asp-52 is the Nucleophile of the active site. Tyr-111 provides a ligand contact to substrate.

This sequence belongs to the tRNA pseudouridine synthase TruA family. Homodimer.

The enzyme catalyses uridine(38/39/40) in tRNA = pseudouridine(38/39/40) in tRNA. Formation of pseudouridine at positions 38, 39 and 40 in the anticodon stem and loop of transfer RNAs. This chain is tRNA pseudouridine synthase A, found in Beijerinckia indica subsp. indica (strain ATCC 9039 / DSM 1715 / NCIMB 8712).